A 380-amino-acid polypeptide reads, in one-letter code: Tubulin alpha chain (380 aa).

Residues Glu-46, Ser-115, Gly-119, Thr-120, Thr-154, Asn-181, and Asn-202 each coordinate GTP. Glu-46 contacts Mg(2+). Residue Glu-228 is part of the active site.

This sequence belongs to the tubulin family. Dimer of alpha and beta chains. A typical microtubule is a hollow water-filled tube with an outer diameter of 25 nm and an inner diameter of 15 nM. Alpha-beta heterodimers associate head-to-tail to form protofilaments running lengthwise along the microtubule wall with the beta-tubulin subunit facing the microtubule plus end conferring a structural polarity. Microtubules usually have 13 protofilaments but different protofilament numbers can be found in some organisms and specialized cells. Mg(2+) serves as cofactor.

The protein resides in the cytoplasm. It localises to the cytoskeleton. The enzyme catalyses GTP + H2O = GDP + phosphate + H(+). Its function is as follows. Tubulin is the major constituent of microtubules, a cylinder consisting of laterally associated linear protofilaments composed of alpha- and beta-tubulin heterodimers. Microtubules grow by the addition of GTP-tubulin dimers to the microtubule end, where a stabilizing cap forms. Below the cap, tubulin dimers are in GDP-bound state, owing to GTPase activity of alpha-tubulin. This is Tubulin alpha chain (TUB1) from Encephalitozoon hellem (Microsporidian parasite).